Here is a 693-residue protein sequence, read N- to C-terminus: Elongation factor G (693 aa).

Positions 8-284 (DMTRNVGIMA…AIVNYMPAPT (277 aa)) constitute a tr-type G domain. Residues 17-24 (AHIDAGKT), 81-85 (DTPGH), and 135-138 (NKMD) contribute to the GTP site.

The protein belongs to the TRAFAC class translation factor GTPase superfamily. Classic translation factor GTPase family. EF-G/EF-2 subfamily.

The protein localises to the cytoplasm. Its function is as follows. Catalyzes the GTP-dependent ribosomal translocation step during translation elongation. During this step, the ribosome changes from the pre-translocational (PRE) to the post-translocational (POST) state as the newly formed A-site-bound peptidyl-tRNA and P-site-bound deacylated tRNA move to the P and E sites, respectively. Catalyzes the coordinated movement of the two tRNA molecules, the mRNA and conformational changes in the ribosome. The chain is Elongation factor G from Fusobacterium nucleatum subsp. nucleatum (strain ATCC 25586 / DSM 15643 / BCRC 10681 / CIP 101130 / JCM 8532 / KCTC 2640 / LMG 13131 / VPI 4355).